Here is a 682-residue protein sequence, read N- to C-terminus: Zinc finger protein 16 (682 aa).

Residues 1–10 show a composition bias toward basic and acidic residues; that stretch reads MPSLRTRREE. Residues 1 to 43 form a disordered region; the sequence is MPSLRTRREEAEMELSVPGPSPWTPAAQARVRDAPAVTHPGSA. Residues 62–210 are necessary for transcription activation; it reads YQQPDCDTRT…GVPTAESPLI (149 aa). The C2H2-type 1; degenerate zinc-finger motif lies at 209–231; the sequence is LICNECGKTFQGNPDLIQRQIVH. The C2H2-type 2; degenerate zinc-finger motif lies at 237–259; the sequence is FMCDDCGKTFSQNSVLKNRHRSH. Lys-253 is covalently cross-linked (Glycyl lysine isopeptide (Lys-Gly) (interchain with G-Cter in SUMO2)). 8 consecutive C2H2-type zinc fingers follow at residues 265–287, 293–315, 321–343, 349–371, 377–399, 405–427, 433–455, and 461–483; these read YQCS…QSHH, YMCN…QKSH, YECN…QRIH, YVCS…HRTH, FECG…QRVH, YECN…HRVH, YKCS…RRIH, and HVCN…QIIH. Required for nuclear localization stretches follow at residues 268–393 and 341–373; these read SECG…AHLR and RIHS…THTG. The required for nuclear localization stretch occupies residues 473 to 503; sequence SSVLRKHQIIHTGEKPYRCSVCGKAFSHSSA. N6-acetyllysine is present on Lys-487. 7 C2H2-type zinc fingers span residues 489-511, 517-539, 545-567, 573-595, 601-623, 629-651, and 657-679; these read YRCS…QGVH, YACH…QRVH, YECT…QRIH, HECN…QKVH, YTCV…QIIH, YKCS…QRIH, and YDCA…QLIH.

This sequence belongs to the krueppel C2H2-type zinc-finger protein family. Interacts with INCA1; the interaction inhibits INCA1 activity and induces the cell cycle process. As to expression, ubiquitous.

Its subcellular location is the nucleus. Functionally, acts as a transcriptional activator. Promotes cell proliferation by facilitating the cell cycle phase transition from the S to G2/M phase. Involved in both the hemin- and phorbol myristate acetate (PMA)-induced erythroid and megakaryocytic differentiation, respectively. Also plays a role as an inhibitor of cell apoptosis. The chain is Zinc finger protein 16 (ZNF16) from Homo sapiens (Human).